The chain runs to 259 residues: Eukaryotic translation initiation factor 3 subunit G-2 (259 aa).

Residues 179 to 257 form the RRM domain; that stretch reads SAVRISNLSE…LILSVEWSKP (79 aa).

It belongs to the eIF-3 subunit G family. Component of the eukaryotic translation initiation factor 3 (eIF-3) complex. The eIF-3 complex interacts with pix.

It is found in the cytoplasm. Functionally, RNA-binding component of the eukaryotic translation initiation factor 3 (eIF-3) complex, which is involved in protein synthesis of a specialized repertoire of mRNAs and, together with other initiation factors, stimulates binding of mRNA and methionyl-tRNAi to the 40S ribosome. The eIF-3 complex specifically targets and initiates translation of a subset of mRNAs involved in cell proliferation. This subunit can bind 18S rRNA. This is Eukaryotic translation initiation factor 3 subunit G-2 from Drosophila virilis (Fruit fly).